We begin with the raw amino-acid sequence, 66 residues long: Potassium channel toxin alpha-KTx 30.1 (66 aa).

The signal sequence occupies residues 1–24 (MNTGFFFFVIMATGLVLTFDTIHA). Cystine bridges form between Cys-30–Cys-50, Cys-36–Cys-55, and Cys-40–Cys-57.

Belongs to the short scorpion toxin superfamily. Potassium channel inhibitor family. Alpha-KTx 30 subfamily. Expressed by the venom gland.

It localises to the secreted. Inhibits Kv1.3/KCNA3 channel (1 uM of the toxin inhibits currents by 64.1%). This is Potassium channel toxin alpha-KTx 30.1 from Scorpiops margerisonae (Scorpion).